We begin with the raw amino-acid sequence, 66 residues long: Large ribosomal subunit protein bL33c (66 aa).

Belongs to the bacterial ribosomal protein bL33 family.

It localises to the plastid. It is found in the chloroplast. The sequence is that of Large ribosomal subunit protein bL33c from Saccharum officinarum (Sugarcane).